The primary structure comprises 335 residues: MPRRYLLDFEKPLVELEKQIEQIRELARDSEVDVSQQLLQLETLATRRREEIFRSLTPAQKIQVARHPQRPSTLDFIQMFCDDWIELHGDRNGGDDMALIGGLGSVNNQPVLLLGHQKGRDTKENVVRNFGMAKPGGYRKALRLMQHADRFSLPILSFIDTPGAYAGLSAEEQGQGEAIARNLREMFGFKVPIIATIIGEGGSGGALGIGVADRLLMFEHSVYTVASPEACASILWRDAAKAPEAATALKITGKDLLELGVIDEVLSEPAGGNNWAPIEAGNTLKASIERHLSELLKMSKEELLEQRYSKFRVLGKFIESSSVEEIKEEFTQKKE.

The CoA carboxyltransferase C-terminal domain occupies 40 to 294 (QLETLATRRR…KASIERHLSE (255 aa)).

It belongs to the AccA family. As to quaternary structure, acetyl-CoA carboxylase is a heterohexamer composed of biotin carboxyl carrier protein (AccB), biotin carboxylase (AccC) and two subunits each of ACCase subunit alpha (AccA) and ACCase subunit beta (AccD).

Its subcellular location is the cytoplasm. It carries out the reaction N(6)-carboxybiotinyl-L-lysyl-[protein] + acetyl-CoA = N(6)-biotinyl-L-lysyl-[protein] + malonyl-CoA. It participates in lipid metabolism; malonyl-CoA biosynthesis; malonyl-CoA from acetyl-CoA: step 1/1. Functionally, component of the acetyl coenzyme A carboxylase (ACC) complex. First, biotin carboxylase catalyzes the carboxylation of biotin on its carrier protein (BCCP) and then the CO(2) group is transferred by the carboxyltransferase to acetyl-CoA to form malonyl-CoA. This chain is Acetyl-coenzyme A carboxylase carboxyl transferase subunit alpha, found in Prochlorococcus marinus (strain MIT 9515).